A 191-amino-acid polypeptide reads, in one-letter code: Adenine phosphoribosyltransferase (191 aa).

Belongs to the purine/pyrimidine phosphoribosyltransferase family. Homodimer.

Its subcellular location is the cytoplasm. It carries out the reaction AMP + diphosphate = 5-phospho-alpha-D-ribose 1-diphosphate + adenine. Its pathway is purine metabolism; AMP biosynthesis via salvage pathway; AMP from adenine: step 1/1. In terms of biological role, catalyzes a salvage reaction resulting in the formation of AMP, that is energically less costly than de novo synthesis. The sequence is that of Adenine phosphoribosyltransferase from Clavibacter sepedonicus (Clavibacter michiganensis subsp. sepedonicus).